A 655-amino-acid chain; its full sequence is p-hydroxybenzoic acid efflux pump subunit AaeB (655 aa).

Transmembrane regions (helical) follow at residues 13-33 (FAVKLACAIVLALFIGFHFQL), 38-58 (WAVLTAAIVAAGPAFAAGGEP), 69-89 (LRIIGTFIGCIAALIIIISMI), 93-113 (LLMILVCCVWAGFCTWISSLV), 121-141 (WGLSGYTALIIVITIQTEPLL), 152-172 (EIVIGIGCAILADLLFSPRSI), 370-390 (LFWLWTGWTSGNGAMVMIAVV), 407-427 (FIYGTLAALPLGLLYFLVIIP), 431-451 (QSMLLLCLSLAVLGFFIGIEV), 459-479 (MGALASTINIIVLDNPMTFHF), and 482-502 (FLDSALGQIVGCMLAFIVILL).

The protein belongs to the aromatic acid exporter ArAE (TC 2.A.85) family.

The protein localises to the cell inner membrane. In terms of biological role, forms an efflux pump with AaeA. Could function as a metabolic relief valve, allowing to eliminate certain compounds when they accumulate to high levels in the cell. The sequence is that of p-hydroxybenzoic acid efflux pump subunit AaeB from Salmonella dublin (strain CT_02021853).